Consider the following 307-residue polypeptide: MmsAB operon regulatory protein (307 aa).

The HTH araC/xylS-type domain occupies 201–299; sequence DGLHAYMREH…GLSPSAYRQR (99 aa). DNA-binding regions (H-T-H motif) lie at residues 218 to 239 and 266 to 289; these read ERLA…KAIT and VARV…SKVM.

Its function is as follows. Regulatory protein for the mmsAB operon. Activates the transcription of the mmsAB genes. The sequence is that of MmsAB operon regulatory protein from Pseudomonas aeruginosa (strain ATCC 15692 / DSM 22644 / CIP 104116 / JCM 14847 / LMG 12228 / 1C / PRS 101 / PAO1).